The primary structure comprises 431 residues: Argininosuccinate lyase (431 aa).

It belongs to the lyase 1 family. Argininosuccinate lyase subfamily.

The protein localises to the cytoplasm. The catalysed reaction is 2-(N(omega)-L-arginino)succinate = fumarate + L-arginine. The protein operates within amino-acid biosynthesis; L-arginine biosynthesis; L-arginine from L-ornithine and carbamoyl phosphate: step 3/3. The sequence is that of Argininosuccinate lyase from Stenotrophomonas maltophilia (strain R551-3).